A 234-amino-acid chain; its full sequence is BTB/POZ domain-containing protein KCTD5 (234 aa).

The residue at position 2 (A2) is an N-acetylalanine. The BTB domain maps to 44 to 146 (KWVRLNVGGT…LVKDKIRERD (103 aa)). The segment at 213-234 (PYGTTSEPSEKAKILQERGSRM) is disordered. Basic and acidic residues predominate over residues 220-234 (PSEKAKILQERGSRM).

As to quaternary structure, homopentamer. Interacts (via C-terminus) with GRASP55/GORASP2. Interacts with CUL3 and with ubiquitinated proteins. Interacts with CRY1.

It localises to the cytoplasm. The protein localises to the cytosol. Its subcellular location is the nucleus. Its function is as follows. Its interaction with CUL3 suggests that it may act as a substrate adapter in some E3 ligase complex. Does not affect the function of Kv channel Kv2.1/KCNB1, Kv1.2/KCNA2, Kv4.2/KCND2 and Kv3.4/KCNC4. In Mus musculus (Mouse), this protein is BTB/POZ domain-containing protein KCTD5 (Kctd5).